The following is a 336-amino-acid chain: MLSYAPENAYQRASTMENKKVFPKEKSGLHPRNRHRSRYDFDALSVSCPELIPFLTPTAYGDISVDFADPLAVKMLNKALLKHFYGIEYWDIPADSLCPPIPGRADYVHHLADLLASCNGEVIPKGKNIALLDIGVGANCIYPIIGQREYGWRFTGTDIDSHALSAAKMVVSMNPTLKNTLRLKQQKDPHAIFEGVWAVNERYDATLCNPPFHGSAEEAAATTRRKLHKLGKNEVAAKPVQNFGGKNSELWCEGGEEGFVSRMVAESVAKAQNCFWFTSLISKKTTLPAIYHALRYVKAVEVRTIEMAQGQKVSRFVAWTFLTPEQQAAWVAERWA.

The protein belongs to the methyltransferase superfamily. METTL16/RlmF family.

It localises to the cytoplasm. It carries out the reaction adenosine(1618) in 23S rRNA + S-adenosyl-L-methionine = N(6)-methyladenosine(1618) in 23S rRNA + S-adenosyl-L-homocysteine + H(+). Specifically methylates the adenine in position 1618 of 23S rRNA. The chain is Ribosomal RNA large subunit methyltransferase F from Yersinia pestis bv. Antiqua (strain Angola).